A 317-amino-acid polypeptide reads, in one-letter code: tRNA pseudouridine synthase B (317 aa).

Asp-47 (nucleophile) is an active-site residue.

Belongs to the pseudouridine synthase TruB family. Type 1 subfamily.

It carries out the reaction uridine(55) in tRNA = pseudouridine(55) in tRNA. Its function is as follows. Responsible for synthesis of pseudouridine from uracil-55 in the psi GC loop of transfer RNAs. The chain is tRNA pseudouridine synthase B from Shewanella sp. (strain MR-4).